The primary structure comprises 600 residues: Aspartate--tRNA(Asp/Asn) ligase (600 aa).

Residue glutamate 175 coordinates L-aspartate. The aspartate stretch occupies residues 199–202 (QLFK). Residue arginine 221 participates in L-aspartate binding. Residues 221 to 223 (RDE) and glutamine 230 each bind ATP. Histidine 453 is a binding site for L-aspartate. Glutamate 487 contacts ATP. Arginine 494 serves as a coordination point for L-aspartate. 539-542 (GWDR) contacts ATP. A disordered region spans residues 564-600 (GGVDPLTDAPAPITPLQRKESGIDAKPKAAENKPEEK). The segment covering 580–600 (QRKESGIDAKPKAAENKPEEK) has biased composition (basic and acidic residues).

This sequence belongs to the class-II aminoacyl-tRNA synthetase family. Type 1 subfamily. Homodimer.

It localises to the cytoplasm. The enzyme catalyses tRNA(Asx) + L-aspartate + ATP = L-aspartyl-tRNA(Asx) + AMP + diphosphate. Aspartyl-tRNA synthetase with relaxed tRNA specificity since it is able to aspartylate not only its cognate tRNA(Asp) but also tRNA(Asn). Reaction proceeds in two steps: L-aspartate is first activated by ATP to form Asp-AMP and then transferred to the acceptor end of tRNA(Asp/Asn). The polypeptide is Aspartate--tRNA(Asp/Asn) ligase (Corynebacterium efficiens (strain DSM 44549 / YS-314 / AJ 12310 / JCM 11189 / NBRC 100395)).